Reading from the N-terminus, the 476-residue chain is Eukaryotic translation initiation factor 3 subunit L (476 aa).

A PCI domain is found at 257–452 (DAIRMFSHIL…DLDYALENDL (196 aa)).

This sequence belongs to the eIF-3 subunit L family. Component of the eukaryotic translation initiation factor 3 (eIF-3) complex.

The protein localises to the cytoplasm. Its function is as follows. Component of the eukaryotic translation initiation factor 3 (eIF-3) complex, which is involved in protein synthesis of a specialized repertoire of mRNAs and, together with other initiation factors, stimulates binding of mRNA and methionyl-tRNAi to the 40S ribosome. The eIF-3 complex specifically targets and initiates translation of a subset of mRNAs involved in cell proliferation. This is Eukaryotic translation initiation factor 3 subunit L from Aspergillus fumigatus (strain CBS 144.89 / FGSC A1163 / CEA10) (Neosartorya fumigata).